A 221-amino-acid polypeptide reads, in one-letter code: Pectate lyase C (221 aa).

Residues 1–28 (MKRLAGTVILSGLLVCGFGQALPEKALA) form the signal peptide.

The protein belongs to the polysaccharide lyase 3 family. Ca(2+) is required as a cofactor.

The protein localises to the secreted. The catalysed reaction is Eliminative cleavage of (1-&gt;4)-alpha-D-galacturonan to give oligosaccharides with 4-deoxy-alpha-D-galact-4-enuronosyl groups at their non-reducing ends.. It catalyses the reaction Eliminative cleavage of (1-&gt;4)-alpha-D-galacturonan methyl ester to give oligosaccharides with 4-deoxy-6-O-methyl-alpha-D-galact-4-enuronosyl groups at their non-reducing ends.. It participates in glycan metabolism; pectin degradation; 2-dehydro-3-deoxy-D-gluconate from pectin: step 2/5. In terms of biological role, catalyzes the depolymerization of both polygalacturonate and pectins of methyl esterification degree from 22 to 89%, with an endo mode of action. In contrast to the majority of pectate lyases, displays high activity on highly methylated pectins. In Bacillus licheniformis (strain ATCC 14580 / DSM 13 / JCM 2505 / CCUG 7422 / NBRC 12200 / NCIMB 9375 / NCTC 10341 / NRRL NRS-1264 / Gibson 46), this protein is Pectate lyase C (pelC).